The following is a 583-amino-acid chain: Threonine--tRNA ligase (583 aa).

Positions 185 to 478 (DHRKLGRELN…LVEHYGGAFP (294 aa)) are catalytic. 3 residues coordinate Zn(2+): C278, H329, and H455.

It belongs to the class-II aminoacyl-tRNA synthetase family. In terms of assembly, homodimer. Requires Zn(2+) as cofactor.

The protein resides in the cytoplasm. The catalysed reaction is tRNA(Thr) + L-threonine + ATP = L-threonyl-tRNA(Thr) + AMP + diphosphate + H(+). In terms of biological role, catalyzes the attachment of threonine to tRNA(Thr) in a two-step reaction: L-threonine is first activated by ATP to form Thr-AMP and then transferred to the acceptor end of tRNA(Thr). Also edits incorrectly charged L-seryl-tRNA(Thr). The chain is Threonine--tRNA ligase from Borrelia recurrentis (strain A1).